A 231-amino-acid chain; its full sequence is MRVKFHTTGETIMTQDELKKAVGWAALQYVQPGTIVGVGTGSTAAHFIDALGTMKGQIEGAVSSSDASTEKLKSLGIHVFDLNEVDSLGIYVDGADEINGHMQMIKGGGAALTREKIIASVAEKFICIADASKQVDILGKFPLPVEVIPMARSAVARQLVKLGGRPEYRQGVVTDNGNVILDVHGMEILDPIAMENAINAIPGVVTVGLFANRGADVALIGTPDGVKTIVK.

Residues 40–43, 93–96, and 106–109 each bind substrate; these read TGST, DGAD, and KGGG. The Proton acceptor role is filled by glutamate 115. Lysine 133 is a binding site for substrate.

The protein belongs to the ribose 5-phosphate isomerase family. In terms of assembly, homodimer.

The enzyme catalyses aldehydo-D-ribose 5-phosphate = D-ribulose 5-phosphate. Its pathway is carbohydrate degradation; pentose phosphate pathway; D-ribose 5-phosphate from D-ribulose 5-phosphate (non-oxidative stage): step 1/1. Functionally, catalyzes the reversible conversion of ribose-5-phosphate to ribulose 5-phosphate. The polypeptide is Ribose-5-phosphate isomerase A (Escherichia coli O1:K1 / APEC).